Reading from the N-terminus, the 440-residue chain is R3H and coiled-coil domain-containing protein 1 (440 aa).

Residues 16-81 (NDFVHRIQEE…KRRTVICHQD (66 aa)) form the R3H domain. The segment at 154 to 225 (TSVLKREAPA…LGPESQSGKG (72 aa)) is disordered. Over residues 157–168 (LKREAPAGRDPE) the composition is skewed to basic and acidic residues. Ser236 carries the post-translational modification Phosphoserine. Residues 242–300 (LEKGKESLLEKRLVAEEEEDEEEVEEDGPSSCSEDDYSELLQEITDNLTKKEIQIEKIH) are a coiled coil. Positions 254 to 276 (LVAEEEEDEEEVEEDGPSSCSED) are disordered. Residues 257–276 (EEEEDEEEVEEDGPSSCSED) are compositionally biased toward acidic residues.

In Homo sapiens (Human), this protein is R3H and coiled-coil domain-containing protein 1.